A 174-amino-acid polypeptide reads, in one-letter code: Repair DNA polymerase X (174 aa).

Positions 42–51 (REEKMLNDVD) are involved in ssDNA binding. Residues Asp-49 and Asp-51 each coordinate Mg(2+). The cysteines at positions 81 and 86 are disulfide-linked. Asp-100 serves as a coordination point for Mg(2+).

This sequence belongs to the DNA polymerase type-X family. It depends on Mg(2+) as a cofactor.

It is found in the virion. It catalyses the reaction DNA(n) + a 2'-deoxyribonucleoside 5'-triphosphate = DNA(n+1) + diphosphate. Error-prone polymerase lacking a proofreading 3'-5' exonuclease which catalyzes the gap-filling reaction during the DNA repair process. Specifically binds intermediates in the single-nucleotide base-excision repair process. Also catalyzes DNA polymerization with low nucleotide-insertion fidelity. Probably acts as a strategic DNA mutase, which gives rise to a rapid emergence of variants. Generates mismatched G-G pairs, in that case, the polymerase first binds the deoxynucleotide followed by mismatch formation. Together with the viral DNA ligase, fills the single nucleotide gaps generated by the AP endonuclease. Binds DNA with high affinity via the helix alphaE. In African swine fever virus (isolate Tick/South Africa/Pretoriuskop Pr4/1996) (ASFV), this protein is Repair DNA polymerase X.